The following is a 593-amino-acid chain: Mitoguardin 2 (593 aa).

2 consecutive transmembrane segments (helical) span residues 11 to 31 (MIQA…TTFG) and 42 to 62 (PGLR…ALAA). Disordered stretches follow at residues 98 to 134 (PSVK…HSGS), 150 to 171 (TAAC…TTDG), and 197 to 229 (VGQR…PESQ). Composition is skewed to low complexity over residues 106–116 (SRRVQSPSSKS) and 124–134 (SSIEPSKHSGS). Serine 132 is modified (phosphoserine). The span at 205–218 (STPTPGDSLQNPDT) shows a compositional bias: polar residues. Threonine 206 carries the phosphothreonine modification. Phosphoserine occurs at positions 220, 224, and 228. Residue threonine 273 is modified to Phosphothreonine. 2 positions are modified to phosphoserine: serine 276 and serine 295. The FFAT motif lies at 292-298 (SFFSATE).

It belongs to the mitoguardin family. Homodimer and heterodimer; forms heterodimers with MIGA1. Interacts with PLD6/MitoPLD. Interacts (via phosphorylated FFAT motif) with MOSPD2. Post-translationally, phosphorylation at Ser-295 of the FFAT motif activates interaction with MOSPD2.

The protein localises to the mitochondrion outer membrane. Regulator of mitochondrial fusion. Acts by forming homo- and heterodimers at the mitochondrial outer membrane and facilitating the formation of PLD6/MitoPLD dimers. May act by regulating phospholipid metabolism via PLD6/MitoPLD. The sequence is that of Mitoguardin 2 from Mus musculus (Mouse).